The following is a 328-amino-acid chain: V-set and immunoglobulin domain-containing protein 2 (328 aa).

A signal peptide spans 1–24 (MAWPLVGAFLCGHLLGFVCLSGLA). Residues 25 to 138 (VEVTVPTEPL…DFYTNGLGLI (114 aa)) form the Ig-like V-type domain. At 25–244 (VEVTVPTEPL…VTDSSEGRVA (220 aa)) the chain is on the extracellular side. Residues Cys-46 and Cys-122 are joined by a disulfide bond. 3 N-linked (GlcNAc...) asparagine glycosylation sites follow: Asn-139, Asn-207, and Asn-232. The Ig-like C2-type domain occupies 145–234 (PPSHPLCSQS…GSASCELNLS (90 aa)). A disulfide bridge connects residues Cys-167 and Cys-218. Residues 245–265 (GTLIGVLLGVLLLSVAAFCLI) traverse the membrane as a helical segment. Topologically, residues 266–328 (RFQKERKKEP…TTKSKLSMVV (63 aa)) are cytoplasmic.

Expressed in the stomach, colon and prostate.

Its subcellular location is the membrane. The protein is V-set and immunoglobulin domain-containing protein 2 (Vsig2) of Mus musculus (Mouse).